Reading from the N-terminus, the 728-residue chain is Phosphoribosylformylglycinamidine synthase subunit PurL (728 aa).

His-42 is a catalytic residue. ATP is bound by residues Tyr-45 and Lys-84. Glu-86 is a Mg(2+) binding site. Residues 87 to 90 and Arg-109 each bind substrate; that span reads SHNH. His-88 (proton acceptor) is an active-site residue. Asp-110 contributes to the Mg(2+) binding site. Gln-237 contacts substrate. Asp-265 is a Mg(2+) binding site. 309-311 is a binding site for substrate; it reads ESQ. ATP-binding residues include Asp-491 and Gly-528. Position 529 (Asn-529) interacts with Mg(2+). Substrate is bound at residue Ser-531.

The protein belongs to the FGAMS family. Monomer. Part of the FGAM synthase complex composed of 1 PurL, 1 PurQ and 2 PurS subunits.

The protein localises to the cytoplasm. The enzyme catalyses N(2)-formyl-N(1)-(5-phospho-beta-D-ribosyl)glycinamide + L-glutamine + ATP + H2O = 2-formamido-N(1)-(5-O-phospho-beta-D-ribosyl)acetamidine + L-glutamate + ADP + phosphate + H(+). The protein operates within purine metabolism; IMP biosynthesis via de novo pathway; 5-amino-1-(5-phospho-D-ribosyl)imidazole from N(2)-formyl-N(1)-(5-phospho-D-ribosyl)glycinamide: step 1/2. Its function is as follows. Part of the phosphoribosylformylglycinamidine synthase complex involved in the purines biosynthetic pathway. Catalyzes the ATP-dependent conversion of formylglycinamide ribonucleotide (FGAR) and glutamine to yield formylglycinamidine ribonucleotide (FGAM) and glutamate. The FGAM synthase complex is composed of three subunits. PurQ produces an ammonia molecule by converting glutamine to glutamate. PurL transfers the ammonia molecule to FGAR to form FGAM in an ATP-dependent manner. PurS interacts with PurQ and PurL and is thought to assist in the transfer of the ammonia molecule from PurQ to PurL. This chain is Phosphoribosylformylglycinamidine synthase subunit PurL, found in Campylobacter jejuni (strain RM1221).